A 154-amino-acid chain; its full sequence is Putative lipoprotein MAB_4074c (154 aa).

Residues 1 to 21 (MMNRVIVGAMGLLAAGAVVVG) form the signal peptide. A lipid anchor (N-palmitoyl cysteine) is attached at Cys22. Cys22 is lipidated: S-diacylglycerol cysteine.

The protein belongs to the mycobacterial 19 kDa antigen family.

It is found in the cell membrane. The chain is Putative lipoprotein MAB_4074c from Mycobacteroides abscessus (strain ATCC 19977 / DSM 44196 / CCUG 20993 / CIP 104536 / JCM 13569 / NCTC 13031 / TMC 1543 / L948) (Mycobacterium abscessus).